Reading from the N-terminus, the 350-residue chain is Biotin synthase (350 aa).

Positions 41–268 constitute a Radical SAM core domain; it reads NEVQISRLLS…LSRVRLSAGR (228 aa). [4Fe-4S] cluster contacts are provided by Cys56, Cys60, and Cys63. Positions 100, 131, 191, and 263 each coordinate [2Fe-2S] cluster.

Belongs to the radical SAM superfamily. Biotin synthase family. In terms of assembly, homodimer. [4Fe-4S] cluster serves as cofactor. It depends on [2Fe-2S] cluster as a cofactor.

The catalysed reaction is (4R,5S)-dethiobiotin + (sulfur carrier)-SH + 2 reduced [2Fe-2S]-[ferredoxin] + 2 S-adenosyl-L-methionine = (sulfur carrier)-H + biotin + 2 5'-deoxyadenosine + 2 L-methionine + 2 oxidized [2Fe-2S]-[ferredoxin]. It participates in cofactor biosynthesis; biotin biosynthesis; biotin from 7,8-diaminononanoate: step 2/2. In terms of biological role, catalyzes the conversion of dethiobiotin (DTB) to biotin by the insertion of a sulfur atom into dethiobiotin via a radical-based mechanism. In Shewanella oneidensis (strain ATCC 700550 / JCM 31522 / CIP 106686 / LMG 19005 / NCIMB 14063 / MR-1), this protein is Biotin synthase.